A 654-amino-acid polypeptide reads, in one-letter code: GTP-binding protein 1 (654 aa).

The span at 1–16 (MASLASSQTEPNTSES) shows a compositional bias: polar residues. The tract at residues 1–44 (MASLASSQTEPNTSESPVPASMFSPEPDGEDSDCSLDGEPLRNG) is disordered. The span at 27-36 (PDGEDSDCSL) shows a compositional bias: acidic residues. A tr-type G domain is found at 147–377 (FLEVRVAVVG…FLNLLSPRSS (231 aa)). The tract at residues 156–163 (GNVDAGKS) is G1. 156-163 (GNVDAGKS) contacts GTP. A G2 region spans residues 195–199 (GRTSS). Residues 241-244 (DLAG) are G3. GTP is bound by residues 241–245 (DLAGH) and 297–300 (TKID). The G4 stretch occupies residues 297 to 300 (TKID). The interval 355–357 (SNV) is G5. A compositionally biased stretch (polar residues) spans 566 to 585 (TNNLPMNSKPPQQVKMQSTK). Residues 566 to 654 (TNNLPMNSKP…GACTASTGGC (89 aa)) are disordered. A compositionally biased stretch (low complexity) spans 609 to 620 (AAAIGVTAGAGA). The span at 631 to 642 (GRRRGGQRHKVK) shows a compositional bias: basic residues.

This sequence belongs to the TRAFAC class translation factor GTPase superfamily. Classic translation factor GTPase family. GTPBP1 subfamily.

The protein localises to the cytoplasm. In terms of biological role, promotes degradation of target mRNA species. Plays a role in the regulation of circadian mRNA stability. Binds GTP and has GTPase activity. The polypeptide is GTP-binding protein 1 (gtpbp1) (Xenopus laevis (African clawed frog)).